We begin with the raw amino-acid sequence, 289 residues long: uncharacterized protein (289 aa).

This is an uncharacterized protein from Drosophila melanogaster (Fruit fly).